The chain runs to 87 residues: Small ribosomal subunit protein bS20 (87 aa).

The interval 1-27 is disordered; that stretch reads MANIKSAKKRAIQSEKRRQHNASRRSM.

It belongs to the bacterial ribosomal protein bS20 family.

In terms of biological role, binds directly to 16S ribosomal RNA. This Aeromonas salmonicida (strain A449) protein is Small ribosomal subunit protein bS20.